Reading from the N-terminus, the 301-residue chain is Homoserine O-acetyltransferase (301 aa).

Residue cysteine 142 is the Acyl-thioester intermediate of the active site. Substrate is bound by residues lysine 163 and serine 192. Histidine 235 (proton acceptor) is an active-site residue. Glutamate 237 is a catalytic residue. Position 249 (arginine 249) interacts with substrate.

Belongs to the MetA family.

It is found in the cytoplasm. It catalyses the reaction L-homoserine + acetyl-CoA = O-acetyl-L-homoserine + CoA. Its pathway is amino-acid biosynthesis; L-methionine biosynthesis via de novo pathway; O-acetyl-L-homoserine from L-homoserine: step 1/1. In terms of biological role, transfers an acetyl group from acetyl-CoA to L-homoserine, forming acetyl-L-homoserine. This is Homoserine O-acetyltransferase from Bacillus cereus (strain ATCC 14579 / DSM 31 / CCUG 7414 / JCM 2152 / NBRC 15305 / NCIMB 9373 / NCTC 2599 / NRRL B-3711).